Here is a 131-residue protein sequence, read N- to C-terminus: Holo-[acyl-carrier-protein] synthase (131 aa).

Residues D8 and E59 each contribute to the Mg(2+) site.

It belongs to the P-Pant transferase superfamily. AcpS family. Mg(2+) is required as a cofactor.

The protein resides in the cytoplasm. The enzyme catalyses apo-[ACP] + CoA = holo-[ACP] + adenosine 3',5'-bisphosphate + H(+). In terms of biological role, transfers the 4'-phosphopantetheine moiety from coenzyme A to a Ser of acyl-carrier-protein. In Rickettsia felis (strain ATCC VR-1525 / URRWXCal2) (Rickettsia azadi), this protein is Holo-[acyl-carrier-protein] synthase.